We begin with the raw amino-acid sequence, 315 residues long: MVSGLGSRGNPFYGRDVLSILDFSRSDLEYLFAEADRVRRDPSAFSGELRGYVLATAFFEPSTRTRLSFQAAMLRLGGSCIDLGELEKSSIAKGENFADTVRMLDAYADVIVVRHRLEGAARFAAEVAEKPVINAGDGKRHHPTQAMLDLYSVKTLKGSVDGLVYGVLGDLKYGRAAASFILGLSLFKPRKVYLISPGLLKAREDVKEALRERGVGFEEVESPSEVIGELDVLYVTRIQRERFPDPSEYEKVRGSYVVDSKLLRNAKEGLIVLHPLPRVDEISFDVDGTPHAKYFEQARLGIPLRMALLKLVLKG.

Residues Arg-64 and Thr-65 each coordinate carbamoyl phosphate. Lys-93 contributes to the L-aspartate binding site. Carbamoyl phosphate is bound by residues Arg-114, His-142, and Gln-145. L-aspartate contacts are provided by Arg-175 and Arg-237. Carbamoyl phosphate-binding residues include Leu-276 and Pro-277.

The protein belongs to the aspartate/ornithine carbamoyltransferase superfamily. ATCase family. As to quaternary structure, heterooligomer of catalytic and regulatory chains.

The catalysed reaction is carbamoyl phosphate + L-aspartate = N-carbamoyl-L-aspartate + phosphate + H(+). It participates in pyrimidine metabolism; UMP biosynthesis via de novo pathway; (S)-dihydroorotate from bicarbonate: step 2/3. Functionally, catalyzes the condensation of carbamoyl phosphate and aspartate to form carbamoyl aspartate and inorganic phosphate, the committed step in the de novo pyrimidine nucleotide biosynthesis pathway. The polypeptide is Aspartate carbamoyltransferase catalytic subunit (Thermofilum pendens (strain DSM 2475 / Hrk 5)).